A 114-amino-acid chain; its full sequence is Small ribosomal subunit protein bS6 (114 aa).

The protein belongs to the bacterial ribosomal protein bS6 family.

Its function is as follows. Binds together with bS18 to 16S ribosomal RNA. This Thermosynechococcus vestitus (strain NIES-2133 / IAM M-273 / BP-1) protein is Small ribosomal subunit protein bS6.